We begin with the raw amino-acid sequence, 706 residues long: Septin ring organizing protein mid2 (706 aa).

2 disordered regions span residues 62-102 (STAP…PFST) and 145-180 (DEASNKSSRSSTPRNSIKSNSSNQGHGDIPIPKKNP). Composition is skewed to polar residues over residues 81 to 90 (YDQTLSNSSS) and 149 to 169 (NKSSRSSTPRNSIKSNSSNQG). Ser379 bears the Phosphoserine mark. A PH domain is found at 583–688 (TLLCDGYLCQ…WMSTLRQHLG (106 aa)).

It belongs to the BUD4 family.

The protein resides in the cytoplasm. Its subcellular location is the cell cortex. The protein localises to the cytoskeleton. In terms of biological role, responsible for the proper stability and function of septins during cytokinesis. Required for the correct formation of the medial septin ring structure in mitosis and for the proper localization of endo-glucanases agn1 and eng1, which are needed for efficient cell separation. May act as a landmark for the localization of hydrolytic proteins to the medial region. The protein is Septin ring organizing protein mid2 (mid2) of Schizosaccharomyces pombe (strain 972 / ATCC 24843) (Fission yeast).